Reading from the N-terminus, the 780-residue chain is Heat shock protein 90-5, chloroplastic (780 aa).

A chloroplast-targeting transit peptide spans Met1–Lys60. Residues Glu106, Asn110, Asp152, Met157, Ser172 to Gly173, Gln196 to Phe201, Thr251, and Arg441 each bind ATP. Positions Gly742–Asp780 are disordered. The segment covering Ser769–Asp780 has biased composition (basic and acidic residues).

The protein belongs to the heat shock protein 90 family. As to quaternary structure, homodimer. Interacts with VIPP1. Interacts with P23-1. Expressed in roots, cotyledons, young leaves, mature leaves, stems, flowers, petals and siliques.

Its subcellular location is the plastid. It localises to the chloroplast stroma. Molecular chaperone required for chloroplast biogenesis. Essential for chloroplast biogenesis and maintenance, and thus for embryogenesis. May be involved in the disassembly of VIPP1 for thylakoid membrane formation and/or maintenance. Cooperates with TIC components and other molecular chaperones to drive transport of preproteins into chloroplasts and functions in the chloroplast stroma to facilitate membrane translocation during protein import into the organelle. This is Heat shock protein 90-5, chloroplastic from Arabidopsis thaliana (Mouse-ear cress).